Reading from the N-terminus, the 410-residue chain is MAAEIHSRPQSSRPVLLSKIEGHQDAVTAALLIPKEDGVITASEDRTIRVWLKRDSGQYWPSIYHTMASPCSAMAYHHDSRRIFVGQDNGAVMEFHVSEDFNKMNFIKTYPAHQNRVSAIIFSLAAEWVISTGHDKCVSWMCTRSGNMLGRHFFSSWASCLQYDLDTQHAFVGDYSGQITLLKLEQNTCSVITTLKGHEGSIACLWWDPIQRLLFSGASDNSVIMWDIGGRKGRTLLLQGHHDRVQSLCYLQLTRQLVSCSADGGIAVWNMDVSREEAPQWLESDSCQKCEQPFFWNIKQMWDTKTLGLRQHHCRKCGQAVCGKCSSKRSSYPVMGFEFQVRVCDSCYDSIKDEDRTSLATFHEGKHNISHMSMDIARGLMVTCGTDRVVKIWDMTPVVGCSLATGFSPH.

WD repeat units lie at residues 22–61 (GHQD…QYWP), 66–105 (TMAS…NKMN), 112–150 (AHQN…NMLG), 153–192 (FFSS…CSVI), 197–236 (GHEG…GRTL), and 240–279 (GHHD…EEAP). An FYVE-type zinc finger spans residues 281 to 352 (WLESDSCQKC…VCDSCYDSIK (72 aa)). Residues cysteine 287, cysteine 290, cysteine 314, cysteine 317, cysteine 322, cysteine 325, cysteine 344, and cysteine 347 each contribute to the Zn(2+) site. The stretch at 364–403 (EGKHNISHMSMDIARGLMVTCGTDRVVKIWDMTPVVGCSL) is one WD 7 repeat. A Phosphoserine modification is found at serine 408.

Binds PtdIns3P in vitro with high specificity over other phosphoinositides. Interacts (via WD repeat 2) with tyrosine-phosphorylated TLR3 (via TIR domain) in response to poly(I:C). Interacts with TLR4 in response to LPS. Interacts with TICAM1 in response to poly(I:C).

The protein localises to the early endosome. Functionally, positively regulates TLR3- and TLR4-mediated signaling pathways by bridging the interaction between TLR3 or TLR4 and TICAM1. Promotes TLR3/4 ligand-induced activation of transcription factors IRF3 and NF-kappa-B, as well as the production of IFN-beta and inflammatory cytokines. The polypeptide is WD repeat and FYVE domain-containing protein 1 (Wdfy1) (Mus musculus (Mouse)).